A 188-amino-acid polypeptide reads, in one-letter code: Elongation factor P (188 aa).

The residue at position 34 (lysine 34) is an N6-(3,6-diaminohexanoyl)-5-hydroxylysine.

This sequence belongs to the elongation factor P family. Post-translationally, may be beta-lysylated on the epsilon-amino group of Lys-34 by the combined action of EpmA and EpmB, and then hydroxylated on the C5 position of the same residue by EpmC (if this protein is present). Lysylation is critical for the stimulatory effect of EF-P on peptide-bond formation. The lysylation moiety may extend toward the peptidyltransferase center and stabilize the terminal 3-CCA end of the tRNA. Hydroxylation of the C5 position on Lys-34 may allow additional potential stabilizing hydrogen-bond interactions with the P-tRNA.

Its subcellular location is the cytoplasm. It participates in protein biosynthesis; polypeptide chain elongation. Functionally, involved in peptide bond synthesis. Alleviates ribosome stalling that occurs when 3 or more consecutive Pro residues or the sequence PPG is present in a protein, possibly by augmenting the peptidyl transferase activity of the ribosome. Modification of Lys-34 is required for alleviation. This chain is Elongation factor P, found in Cronobacter sakazakii (strain ATCC BAA-894) (Enterobacter sakazakii).